Consider the following 386-residue polypeptide: Ovalbumin (386 aa).

The residue at position 2 (Gly-2) is an N-acetylglycine. Ser-69 is subject to Phosphoserine. A disulfide bond links Cys-74 and Cys-121. A glycan (N-linked (GlcNAc...) asparagine) is linked at Asn-293. Phosphoserine is present on Ser-345.

Belongs to the serpin family. Ov-serpin subfamily. Post-translationally, the N-terminus is blocked.

Its subcellular location is the secreted. Storage protein of egg white. Lacks protease inhibitory activity. The protein is Ovalbumin (SERPINB14) of Dromaius novaehollandiae (Emu).